We begin with the raw amino-acid sequence, 237 residues long: Ribosomal RNA small subunit methyltransferase G (237 aa).

S-adenosyl-L-methionine is bound by residues Gly-78, Phe-83, 129-130 (AE), and Arg-148.

It belongs to the methyltransferase superfamily. RNA methyltransferase RsmG family.

The protein resides in the cytoplasm. Its function is as follows. Specifically methylates the N7 position of a guanine in 16S rRNA. The protein is Ribosomal RNA small subunit methyltransferase G of Streptococcus pyogenes serotype M12 (strain MGAS9429).